Reading from the N-terminus, the 149-residue chain is Arginine repressor (149 aa).

This sequence belongs to the ArgR family.

It localises to the cytoplasm. It functions in the pathway amino-acid biosynthesis; L-arginine biosynthesis [regulation]. Regulates arginine biosynthesis genes. This is Arginine repressor from Bacillus cereus (strain ATCC 10987 / NRS 248).